Reading from the N-terminus, the 561-residue chain is Potassium-transporting ATPase potassium-binding subunit (561 aa).

Transmembrane regions (helical) follow at residues 4 to 24 (IVMQDAFFVVLLLVLAVPLGI), 65 to 85 (AVSVLAFSAVGFVFVMAVLML), 133 to 153 (IGLTVQNFVSAATGIAVLFAV), 177 to 197 (LYILLPLSLILALLLVSQGVV), 253 to 273 (FTNLIEMLAILLIPVALVVMF), 285 to 305 (AIMTAMMIVFVIGVVAITISE), 380 to 400 (GLYGMIGFIILTVFIAGLLVG), 417 to 437 (MVCLLILVPPLLTLFGTAVAV), 484 to 504 (MVGAVMMLLARFIPLVAALYL), and 528 to 548 (FIGLLIGVVVLVGALSFLPAL).

Belongs to the KdpA family. As to quaternary structure, the system is composed of three essential subunits: KdpA, KdpB and KdpC.

The protein localises to the cell membrane. Its function is as follows. Part of the high-affinity ATP-driven potassium transport (or Kdp) system, which catalyzes the hydrolysis of ATP coupled with the electrogenic transport of potassium into the cytoplasm. This subunit binds the extracellular potassium ions and delivers the ions to the membrane domain of KdpB through an intramembrane tunnel. In Listeria monocytogenes serotype 4b (strain CLIP80459), this protein is Potassium-transporting ATPase potassium-binding subunit.